We begin with the raw amino-acid sequence, 527 residues long: MNQSAEAPSSENVATRQIRIFDTTLRDGEQSPGASMNLAEKLEVASALVDLGVDIIEAGFPIASPGDFESVRQIATTIRGATICGLARCAEKDIDRAWEALKTAPQARIHVFLATSAIHREFKLRMTPDEIVERAVAGVRRAASHCDDVEFSPEDACRTEHDFLCRVVEAAIDAGATTINVPDTVGYTTPGEIYDRFKMLRDRVPNMDKAVLSTHCHDDLGMAVANSLAAVDAGAGQIECTINGIGERAGNAALEELVMAMKTRQDFYHCQTNINSKRLVPVSRLVSKTTGINVQRNKAIVGRNAFAHESGIHQDGMLKERTTYEIMSPEEVGFTKTDLVLGKHSGRAALADRAKQLGMTLTGEQLQEVFEAFKELADKKKEIYDGDIVALVQQKISETVAPEWTLVDYEVTSGKNQTPNVRVTLRRDEQDITEQVAQGDGPIDAAFWAVEKITGIQVVCKDFRVRSATLGRDAIGEVNLEVEHEGKTYRGTGVSTDSVESTILAMLNAINRIVAGIASDPGELPQP.

Residues 18-280 (IRIFDTTLRD…QTNINSKRLV (263 aa)) form the Pyruvate carboxyltransferase domain. Mn(2+) contacts are provided by aspartate 27, histidine 215, histidine 217, and asparagine 251. The segment at 405-527 (TLVDYEVTSG…ASDPGELPQP (123 aa)) is regulatory domain.

This sequence belongs to the alpha-IPM synthase/homocitrate synthase family. LeuA type 1 subfamily. As to quaternary structure, homodimer. It depends on Mn(2+) as a cofactor.

The protein resides in the cytoplasm. It catalyses the reaction 3-methyl-2-oxobutanoate + acetyl-CoA + H2O = (2S)-2-isopropylmalate + CoA + H(+). It functions in the pathway amino-acid biosynthesis; L-leucine biosynthesis; L-leucine from 3-methyl-2-oxobutanoate: step 1/4. Its function is as follows. Catalyzes the condensation of the acetyl group of acetyl-CoA with 3-methyl-2-oxobutanoate (2-ketoisovalerate) to form 3-carboxy-3-hydroxy-4-methylpentanoate (2-isopropylmalate). The polypeptide is 2-isopropylmalate synthase (Rhodopirellula baltica (strain DSM 10527 / NCIMB 13988 / SH1)).